The sequence spans 81 residues: Three-finger toxin A1 (81 aa).

Residues 1 to 21 (MKTLLLTLVVVTIVCLDFGHT) form the signal peptide. Disulfide bonds link Cys24–Cys43, Cys38–Cys60, Cys62–Cys73, and Cys74–Cys79.

The protein belongs to the three-finger toxin family. Short-chain subfamily. Type I alpha-neurotoxin sub-subfamily. In terms of tissue distribution, expressed by the venom gland.

The protein localises to the secreted. Its function is as follows. Binds and inhibits fetal (alpha-1-beta-1-gamma-delta/CHRNA1-CHRNB1-CHRNG-CHRND, IC(50)=1.4 nM), adult (alpha-1-beta-1-delta-epsilon/CHRNA1-CHRNB1-CHRND-CHRNE, IC(50)=12 nM) and neuronal alpha-7/CHRNA7 (IC(50)=400 nM) nicotinic acetylcholine receptors (nAChR) thereby impairing neuromuscular and neuronal transmissions. In Micrurus laticollaris (Balsas coral snake), this protein is Three-finger toxin A1.